We begin with the raw amino-acid sequence, 334 residues long: HTH-type transcriptional repressor PurR (334 aa).

In terms of domain architecture, HTH lacI-type spans 2–56; that stretch reads ATIKDVARMAGVSTTTVSHVINKTRFVAEATQKKVLAAVDDLNYAPSAVARSLKC. A DNA-binding region (H-T-H motif) is located at residues 4-23; the sequence is IKDVARMAGVSTTTVSHVIN. Residues 48 to 56 mediate DNA binding; it reads SAVARSLKC. Hypoxanthine contacts are provided by Phe-73, Lys-189, Thr-191, Phe-220, and Asp-274.

In terms of assembly, homodimer.

It participates in purine metabolism; purine nucleotide biosynthesis [regulation]. Functionally, is the main repressor of the genes involved in the de novo synthesis of purine nucleotides, regulating purB, purC, purEK, purF, purHD, purL, purMN and guaBA expression. PurR is allosterically activated to bind its cognate DNA by binding the purine corepressors, hypoxanthine or guanine, thereby effecting transcription repression. This Photobacterium profundum (strain SS9) protein is HTH-type transcriptional repressor PurR.